The primary structure comprises 235 residues: 2,3-bisphosphoglycerate-dependent phosphoglycerate mutase (235 aa).

Residues 8–15, 21–22, Arg58, 110–113, Lys121, 137–138, and 181–182 contribute to the substrate site; these read RHGESIWN, TG, ERYY, RR, and GN. The active-site Tele-phosphohistidine intermediate is the His9. Catalysis depends on Glu110, which acts as the Proton donor/acceptor.

This sequence belongs to the phosphoglycerate mutase family. BPG-dependent PGAM subfamily.

The catalysed reaction is (2R)-2-phosphoglycerate = (2R)-3-phosphoglycerate. The protein operates within carbohydrate degradation; glycolysis; pyruvate from D-glyceraldehyde 3-phosphate: step 3/5. In terms of biological role, catalyzes the interconversion of 2-phosphoglycerate and 3-phosphoglycerate. This Methanococcus vannielii (strain ATCC 35089 / DSM 1224 / JCM 13029 / OCM 148 / SB) protein is 2,3-bisphosphoglycerate-dependent phosphoglycerate mutase.